Here is a 213-residue protein sequence, read N- to C-terminus: Large ribosomal subunit protein uL3 (213 aa).

This sequence belongs to the universal ribosomal protein uL3 family. Part of the 50S ribosomal subunit. Forms a cluster with proteins L14 and L19.

Its function is as follows. One of the primary rRNA binding proteins, it binds directly near the 3'-end of the 23S rRNA, where it nucleates assembly of the 50S subunit. The sequence is that of Large ribosomal subunit protein uL3 from Bifidobacterium longum (strain DJO10A).